The chain runs to 376 residues: Transcriptional regulator STP4 (376 aa).

3 disordered regions span residues 25–58 (QNYC…PHAS), 89–122 (SSNS…SNSS), and 137–210 (VNCI…NWKP). Low complexity-rich tracts occupy residues 32-50 (SPSP…TSPP) and 89-103 (SSNS…YSPT). Composition is skewed to polar residues over residues 146–183 (PRST…LSVK) and 191–200 (EPQNSNTIIS). The C2H2-type zinc finger occupies 241 to 263 (HICKYCERGFARPNDLFRHVKCH).

The protein resides in the nucleus. Functionally, probable transcription factor involved in response to cell wall damage. The sequence is that of Transcriptional regulator STP4 (STP4) from Candida albicans (strain SC5314 / ATCC MYA-2876) (Yeast).